Consider the following 652-residue polypeptide: Iron-regulated outer membrane virulence protein (652 aa).

The N-terminal stretch at 1–25 is a signal peptide; sequence MSRFNPSPVSLSVTLGLMFSASAFA. Residues 33–40 carry the TonB box motif; it reads ETMVVTAA. One can recognise a TBDR plug domain in the interval 45-162; the sequence is VIQNAPASIS…IGGVINIITR (118 aa). The TBDR beta-barrel domain occupies 167–652; sequence QWSGNVQLST…RYWLGLDIAF (486 aa). The TonB C-terminal box signature appears at 635–652; sequence YGYVEDGRRYWLGLDIAF.

This sequence belongs to the TonB-dependent receptor family.

The protein localises to the cell outer membrane. In terms of biological role, involved in the initial step of iron uptake by binding ferric vibriobactin, an iron chelatin siderophore that allows V.cholerae to extract iron from the environment. The chain is Iron-regulated outer membrane virulence protein (irgA) from Vibrio cholerae serotype O1 (strain ATCC 39315 / El Tor Inaba N16961).